Reading from the N-terminus, the 499-residue chain is Potassium voltage-gated channel subfamily A member 2 (499 aa).

The segment at 1 to 27 (MTVATGEPADEAAALPGHPQDTYDPEA) is disordered. A tetramerization domain region spans residues 1 to 125 (MTVATGEPAD…YELGEEAMEM (125 aa)). Over 1–160 (MTVATGEPAD…LLFEYPESSG (160 aa)) the chain is Cytoplasmic. A helical transmembrane segment spans residues 161–182 (PARIIAIVSVMVILISIVSFCL). Residues 183–221 (ETLPIFRDENEDMHGGGVTFHTYSNSTIGYQQSTSFTDP) lie on the Extracellular side of the membrane. Asn207 is a glycosylation site (N-linked (GlcNAc...) asparagine). The helical transmembrane segment at 222–243 (FFIVETLCIIWFSFEFLVRFFA) threads the bilayer. Residue Cys244 is the site of S-palmitoyl cysteine attachment. Topologically, residues 244 to 254 (CPSKAGFFTNI) are cytoplasmic. Residues 255–275 (MNIIDIVAIIPYFITLGTELA) traverse the membrane as a helical segment. Over 276–289 (EKPEDAQQGQQAMS) the chain is Extracellular. A helical; Voltage-sensor transmembrane segment spans residues 290–310 (LAILRVIRLVRVFRIFKLSRH). At 311–325 (SKGLQILGQTLKASM) the chain is on the cytoplasmic side. Residues 312 to 325 (KGLQILGQTLKASM) are S4-S5 linker. Residues 326–347 (RELGLLIFFLFIGVILFSSAVY) form a helical membrane-spanning segment. Over 348–361 (FAEADERESQFPSI) the chain is Extracellular. Positions 362–373 (PDAFWWAVVSMT) form an intramembrane region, helical. Residues 374-379 (TVGYGD) carry the Selectivity filter motif. Residues 374–381 (TVGYGDMV) lie within the membrane without spanning it. Topologically, residues 382–388 (PTTIGGK) are extracellular. The chain crosses the membrane as a helical span at residues 389–417 (IVGSLCAIAGVLTIALPVPVIVSNFNYFY). At 418–499 (HRETEGEEQA…VNITKMLTDV (82 aa)) the chain is on the cytoplasmic side. Tyr429 is modified (phosphotyrosine). Phosphoserine occurs at positions 434, 440, 441, and 449. The residue at position 458 (Tyr458) is a Phosphotyrosine. Residue Ser468 is modified to Phosphoserine. The PDZ-binding motif lies at 497 to 499 (TDV).

Belongs to the potassium channel family. A (Shaker) (TC 1.A.1.2) subfamily. Kv1.2/KCNA2 sub-subfamily. Homotetramer and heterotetramer with other channel-forming alpha subunits, such as KCNA1, KCNA4, KCNA5, KCNA6 and KCNA7. Channel activity is regulated by interaction with the beta subunits, including KCNAB1 and KCNAB2. Identified in a complex with KCNA1 and KCNAB2. Identified in a complex with KCNA5 and KCNAB1. Interacts with the beta subunit KCNAB1. Identified in a complex with KCNA4 and FYN. Interacts with PTK2B. Interacts (via C-terminus) with CTTN. Interacts (via N-terminal cytoplasmic domain) with RHOA (GTP-bound form); this regulates channel activity by reducing location at the cell surface in response to CHRM1 activation. Interacts with DRD2. Interacts with SIGMAR1; cocaine consumption leads to increased interaction. Interacts with ADAM22. Interacts with CNTNAP2. Interacts (via C-terminus) with the PDZ domains of DLG1, DLG2 and DLG4. Interacts with ADAM11. Interacts with LYNX1. Phosphorylated on tyrosine residues; phosphorylation increases in response to ischemia. Phosphorylated on tyrosine residues by activated PTK2B/PYK2. Phosphorylation on tyrosine residues suppresses ion channel activity. Phosphorylated on tyrosine residues in response to CHRM1 activation; this abolishes interaction with CTTN. This is probably due to endocytosis of the phosphorylated channel subunits. Phosphorylated on serine residues in response to increased cAMP levels; phosphorylation is apparently not catalyzed by PKA. Post-translationally, N-glycosylated, with complex, sialylated N-glycans. As to expression, expressed in a wide variety of gastrointestinal smooth muscles. Not expressed in portal vein, renal artery, and uterus.

Its subcellular location is the cell membrane. The protein localises to the membrane. It localises to the cell projection. The protein resides in the axon. It is found in the synapse. Its subcellular location is the presynaptic cell membrane. The protein localises to the synaptosome. It localises to the endoplasmic reticulum membrane. The protein resides in the dendrite. It is found in the lamellipodium membrane. Its subcellular location is the cell junction. The protein localises to the paranodal septate junction. The enzyme catalyses K(+)(in) = K(+)(out). With respect to regulation, inhibited by 4-aminopyridine (4-AP). Inhibited by dendrotoxin (DTX) and charybdotoxin (CTX), but not by tetraethylammonium (TEA). Inhibited by tityustoxin-K alpha (TsTX-Kalpha), a toxin that is highly specific for KCNA2. Inhibited by maurotoxin. Inhibited by kappaM conotoxins kappaM-RIIIJ and kappaM-RIIIK. Its function is as follows. Voltage-gated potassium channel that mediates transmembrane potassium transport in excitable membranes, primarily in the brain and the central nervous system, but also in the cardiovascular system. Prevents aberrant action potential firing and regulates neuronal output. Forms tetrameric potassium-selective channels through which potassium ions pass in accordance with their electrochemical gradient. The channel alternates between opened and closed conformations in response to the voltage difference across the membrane. Can form functional homotetrameric channels and heterotetrameric channels that contain variable proportions of KCNA1, KCNA2, KCNA4, KCNA5, KCNA6, KCNA7, and possibly other family members as well; channel properties depend on the type of alpha subunits that are part of the channel. Channel properties are modulated by cytoplasmic beta subunits that regulate the subcellular location of the alpha subunits and promote rapid inactivation of delayed rectifier potassium channels. In vivo, membranes probably contain a mixture of heteromeric potassium channel complexes, making it difficult to assign currents observed in intact tissues to any particular potassium channel family member. Homotetrameric KCNA2 forms a delayed-rectifier potassium channel that opens in response to membrane depolarization, followed by slow spontaneous channel closure. In contrast, a heteromultimer formed by KCNA2 and KCNA4 shows rapid inactivation. Regulates neuronal excitability and plays a role as pacemaker in the regulation of neuronal action potentials. KCNA2-containing channels play a presynaptic role and prevent hyperexcitability and aberrant action potential firing. Response to toxins that are selective for KCNA2-containing potassium channels suggests that in Purkinje cells, dendritic subthreshold KCNA2-containing potassium channels prevent random spontaneous calcium spikes, suppressing dendritic hyperexcitability without hindering the generation of somatic action potentials, and thereby play an important role in motor coordination. Plays a role in the induction of long-term potentiation of neuron excitability in the CA3 layer of the hippocampus. May function as down-stream effector for G protein-coupled receptors and inhibit GABAergic inputs to basolateral amygdala neurons. May contribute to the regulation of neurotransmitter release, such as gamma-aminobutyric acid (GABA). Contributes to the regulation of the axonal release of the neurotransmitter dopamine. Reduced KCNA2 expression plays a role in the perception of neuropathic pain after peripheral nerve injury, but not acute pain. Plays a role in the regulation of the time spent in non-rapid eye movement (NREM) sleep. This chain is Potassium voltage-gated channel subfamily A member 2 (KCNA2), found in Canis lupus familiaris (Dog).